We begin with the raw amino-acid sequence, 137 residues long: Large ribosomal subunit protein uL16 (137 aa).

The protein belongs to the universal ribosomal protein uL16 family. In terms of assembly, part of the 50S ribosomal subunit.

In terms of biological role, binds 23S rRNA and is also seen to make contacts with the A and possibly P site tRNAs. This is Large ribosomal subunit protein uL16 from Nitrobacter hamburgensis (strain DSM 10229 / NCIMB 13809 / X14).